A 570-amino-acid chain; its full sequence is PTS system lactose-specific EIICB component (570 aa).

The PTS EIIC type-3 domain maps to 9–410 (IEKGKPFFEK…VVDIIIYYPF (402 aa)). A run of 9 helical transmembrane segments spans residues 31–51 (GFIS…IAYV), 65–85 (AILM…VAGT), 104–124 (INFI…ASDP), 133–153 (AFMG…TVIV), 178–198 (FKDL…DLVI), 223–243 (GWIG…VGIH), 283–303 (MFIV…MFMW), 340–360 (VFFI…KLFV), and 382–402 (IIMG…LIVV). In terms of domain architecture, PTS EIIB type-3 spans 467-570 (QTNVLVLCAG…LDFVQQQFEN (104 aa)). Cys-474 serves as the catalytic Phosphocysteine intermediate; for EIIB activity. Cys-474 bears the Phosphocysteine; by EIIA mark.

Its subcellular location is the cell membrane. The catalysed reaction is lactose(out) + N(pros)-phospho-L-histidyl-[protein] = lactose 6-phosphate(in) + L-histidyl-[protein]. The phosphoenolpyruvate-dependent sugar phosphotransferase system (sugar PTS), a major carbohydrate active transport system, catalyzes the phosphorylation of incoming sugar substrates concomitantly with their translocation across the cell membrane. The enzyme II LacEF PTS system is involved in lactose transport, but can also use galactose, isopropyl beta-thio-galactopyranoside and thiomethyl beta-D-galactopyranoside (TMG) as substrates. The polypeptide is PTS system lactose-specific EIICB component (Staphylococcus aureus).